The sequence spans 436 residues: Chorion-specific transcription factor GCMa (436 aa).

The segment at residues 14–169 is a DNA-binding region (GCM); it reads LSWDINDMKL…KLEAEARRAM (156 aa). The Zn(2+) site is built by Cys76, Cys82, Cys86, Cys113, Cys116, Cys125, His152, and His154.

Polyubiquitinated in the presence of UBE2D2 and FBXW2 (in vitro).

The protein resides in the nucleus. Its function is as follows. Transcription factor involved in the control of expression of placental growth factor (PGF) and other placenta-specific genes. Binds to the trophoblast-specific element 2 (TSE2) of the aromatase gene enhancer. Binds to the SYDE1 promoter. Has a central role in mediating the differentiation of trophoblast cells along both the villous and extravillous pathways in placental development. The sequence is that of Chorion-specific transcription factor GCMa (Gcm1) from Rattus norvegicus (Rat).